The following is a 271-amino-acid chain: Putative phosphoenolpyruvate synthase regulatory protein (271 aa).

G151 to T158 is an ADP binding site.

This sequence belongs to the pyruvate, phosphate/water dikinase regulatory protein family. PSRP subfamily.

The enzyme catalyses [pyruvate, water dikinase] + ADP = [pyruvate, water dikinase]-phosphate + AMP + H(+). It carries out the reaction [pyruvate, water dikinase]-phosphate + phosphate + H(+) = [pyruvate, water dikinase] + diphosphate. Its function is as follows. Bifunctional serine/threonine kinase and phosphorylase involved in the regulation of the phosphoenolpyruvate synthase (PEPS) by catalyzing its phosphorylation/dephosphorylation. The sequence is that of Putative phosphoenolpyruvate synthase regulatory protein from Burkholderia cenocepacia (strain ATCC BAA-245 / DSM 16553 / LMG 16656 / NCTC 13227 / J2315 / CF5610) (Burkholderia cepacia (strain J2315)).